The chain runs to 119 residues: Phytosulfokines 2 (119 aa).

Residues 1–34 (MSTTRGVSSSSAAAALALLLLFALCFFSFHSAAA) form the signal peptide. The propeptide occupies 35–109 (ARAVPRDEHQ…RRLLSDAHLD (75 aa)). Tyr110 and Tyr112 each carry sulfotyrosine. Positions 115–119 (HKNKP) are excised as a propeptide.

It belongs to the phytosulfokine family. In terms of processing, sulfation is important for activity and for the binding to a putative membrane receptor. Post-translationally, PSK-alpha is produced by endopeptidase digestion. PSK-beta is produced from PSK-alpha by exopeptidase digestion.

The protein localises to the secreted. In terms of biological role, promotes plant cell differentiation, organogenesis and somatic embryogenesis as well as cell proliferation. In Oryza sativa subsp. indica (Rice), this protein is Phytosulfokines 2 (PSK2).